We begin with the raw amino-acid sequence, 245 residues long: Pyridoxine 5'-phosphate synthase (245 aa).

Residue Asn-7 participates in 3-amino-2-oxopropyl phosphate binding. A 1-deoxy-D-xylulose 5-phosphate-binding site is contributed by 9-10 (DH). Residue Arg-18 participates in 3-amino-2-oxopropyl phosphate binding. His-43 serves as the catalytic Proton acceptor. Residues Arg-45 and His-50 each contribute to the 1-deoxy-D-xylulose 5-phosphate site. Catalysis depends on Glu-70, which acts as the Proton acceptor. Thr-100 is a 1-deoxy-D-xylulose 5-phosphate binding site. Residue His-190 is the Proton donor of the active site. Residues Gly-191 and 212 to 213 (GH) each bind 3-amino-2-oxopropyl phosphate.

It belongs to the PNP synthase family. As to quaternary structure, homooctamer; tetramer of dimers.

The protein localises to the cytoplasm. It catalyses the reaction 3-amino-2-oxopropyl phosphate + 1-deoxy-D-xylulose 5-phosphate = pyridoxine 5'-phosphate + phosphate + 2 H2O + H(+). The protein operates within cofactor biosynthesis; pyridoxine 5'-phosphate biosynthesis; pyridoxine 5'-phosphate from D-erythrose 4-phosphate: step 5/5. Functionally, catalyzes the complicated ring closure reaction between the two acyclic compounds 1-deoxy-D-xylulose-5-phosphate (DXP) and 3-amino-2-oxopropyl phosphate (1-amino-acetone-3-phosphate or AAP) to form pyridoxine 5'-phosphate (PNP) and inorganic phosphate. In Prochlorococcus marinus (strain NATL2A), this protein is Pyridoxine 5'-phosphate synthase.